The sequence spans 147 residues: Testis-expressed protein 29 (147 aa).

Residues 1–57 (MRYAPEFKKSPSHLLKKFAVCDIPLYDICDYNVSRDRCKELGCCFYKGICYEKAVPS) are Extracellular-facing. Residues 58–78 (YVQVFSALIVIIAGAFVITII) form a helical membrane-spanning segment. Residues 79 to 147 (YRVIQESRRE…IVTEEEETED (69 aa)) lie on the Cytoplasmic side of the membrane. Residues 86–147 (RREKEVPTEA…IVTEEEETED (62 aa)) form a disordered region. The segment covering 99 to 108 (AKSSVQVETQ) has biased composition (polar residues). The segment covering 109–120 (PPSSAGAGSKAP) has biased composition (low complexity). Basic and acidic residues predominate over residues 125-135 (PQSKESGREDA).

The protein resides in the membrane. This is Testis-expressed protein 29 (TEX29) from Bos taurus (Bovine).